A 385-amino-acid polypeptide reads, in one-letter code: 8-amino-7-oxononanoate synthase (385 aa).

Arginine 21 is a binding site for substrate. Residue 108–109 participates in pyridoxal 5'-phosphate binding; that stretch reads GF. Histidine 133 provides a ligand contact to substrate. Residues serine 179, histidine 207, and threonine 233 each coordinate pyridoxal 5'-phosphate. An N6-(pyridoxal phosphate)lysine modification is found at lysine 236. Threonine 352 provides a ligand contact to substrate.

Belongs to the class-II pyridoxal-phosphate-dependent aminotransferase family. BioF subfamily. In terms of assembly, homodimer. Pyridoxal 5'-phosphate is required as a cofactor.

The enzyme catalyses 6-carboxyhexanoyl-[ACP] + L-alanine + H(+) = (8S)-8-amino-7-oxononanoate + holo-[ACP] + CO2. It participates in cofactor biosynthesis; biotin biosynthesis. Its function is as follows. Catalyzes the decarboxylative condensation of pimeloyl-[acyl-carrier protein] and L-alanine to produce 8-amino-7-oxononanoate (AON), [acyl-carrier protein], and carbon dioxide. The sequence is that of 8-amino-7-oxononanoate synthase from Klebsiella pneumoniae (strain 342).